The primary structure comprises 899 residues: Translation initiation factor IF-2 (899 aa).

Disordered regions lie at residues 65–84 (KTRSTLNVPSTGGKSKSVQI) and 91–310 (TYVK…SFNK). Residues 68 to 82 (STLNVPSTGGKSKSV) show a composition bias toward polar residues. Over residues 108-164 (QARREAEEQAQRAAEEQAKREAELREAAEKAKRAADEQAKREAAEKAKRDVAEKEKV) the composition is skewed to basic and acidic residues. Residues 165–174 (TNQQNENMTK) show a composition bias toward polar residues. Basic and acidic residues predominate over residues 177–236 (QAEKAKREAEAAELKRKAEEAARLKVEEEARRIAEEARRMAEENAGRWEAESAKPEESAD). Basic residues predominate over residues 262–276 (SRSRAGKVTKQKKGN). The segment covering 277 to 290 (RQSESKADREEARA) has biased composition (basic and acidic residues). Positions 398 to 567 (ARAPVVTIMG…LLQAEVLELK (170 aa)) constitute a tr-type G domain. The segment at 407–414 (GHVDHGKT) is G1. 407 to 414 (GHVDHGKT) contacts GTP. Residues 432 to 436 (GITQH) form a G2 region. Residues 453 to 456 (DTPG) are G3. Residues 453–457 (DTPGH) and 507–510 (NKID) each bind GTP. The G4 stretch occupies residues 507–510 (NKID). Positions 543–545 (SAK) are G5.

This sequence belongs to the TRAFAC class translation factor GTPase superfamily. Classic translation factor GTPase family. IF-2 subfamily.

The protein localises to the cytoplasm. Functionally, one of the essential components for the initiation of protein synthesis. Protects formylmethionyl-tRNA from spontaneous hydrolysis and promotes its binding to the 30S ribosomal subunits. Also involved in the hydrolysis of GTP during the formation of the 70S ribosomal complex. The chain is Translation initiation factor IF-2 from Pectobacterium carotovorum subsp. carotovorum (strain PC1).